The chain runs to 99 residues: Large ribosomal subunit protein uL23 (99 aa).

Belongs to the universal ribosomal protein uL23 family. In terms of assembly, part of the 50S ribosomal subunit. Contacts protein L29, and trigger factor when it is bound to the ribosome.

In terms of biological role, one of the early assembly proteins it binds 23S rRNA. One of the proteins that surrounds the polypeptide exit tunnel on the outside of the ribosome. Forms the main docking site for trigger factor binding to the ribosome. The chain is Large ribosomal subunit protein uL23 from Shewanella sediminis (strain HAW-EB3).